A 487-amino-acid chain; its full sequence is Glutamate--tRNA ligase (487 aa).

Residues 11-21 (PSPTGYPHLGN) carry the 'HIGH' region motif. Zn(2+) is bound by residues Cys-108, Cys-110, Cys-135, and Asp-137. The short motif at 245–249 (KLSKR) is the 'KMSKS' region element. Lys-248 contacts ATP.

The protein belongs to the class-I aminoacyl-tRNA synthetase family. Glutamate--tRNA ligase type 1 subfamily. Monomer. It depends on Zn(2+) as a cofactor.

Its subcellular location is the cytoplasm. It carries out the reaction tRNA(Glu) + L-glutamate + ATP = L-glutamyl-tRNA(Glu) + AMP + diphosphate. Functionally, catalyzes the attachment of glutamate to tRNA(Glu) in a two-step reaction: glutamate is first activated by ATP to form Glu-AMP and then transferred to the acceptor end of tRNA(Glu). This is Glutamate--tRNA ligase from Dehalococcoides mccartyi (strain ATCC BAA-2100 / JCM 16839 / KCTC 5957 / BAV1).